Reading from the N-terminus, the 1109-residue chain is Cation channel sperm-associated auxiliary subunit beta (1109 aa).

The Extracellular portion of the chain corresponds to methionine 1 to proline 1055. Cysteine 35 and cysteine 60 are joined by a disulfide. Asparagine 66, asparagine 90, and asparagine 118 each carry an N-linked (GlcNAc...) asparagine glycan. Cysteine 189 and cysteine 302 are disulfide-bonded. Asparagine 321 is a glycosylation site (N-linked (GlcNAc...) asparagine). The cysteines at positions 330 and 343 are disulfide-linked. Asparagine 672 carries N-linked (GlcNAc...) asparagine glycosylation. 4 disulfides stabilise this stretch: cysteine 720–cysteine 818, cysteine 831–cysteine 1039, cysteine 913–cysteine 922, and cysteine 924–cysteine 939. Residues asparagine 915 and asparagine 923 are each glycosylated (N-linked (GlcNAc...) asparagine). N-linked (GlcNAc...) asparagine glycosylation occurs at asparagine 1017. The helical transmembrane segment at phenylalanine 1056–phenylalanine 1078 threads the bilayer. Residues valine 1079–serine 1109 lie on the Cytoplasmic side of the membrane.

Component of the CatSper complex or CatSpermasome composed of the core pore-forming members CATSPER1, CATSPER2, CATSPER3 and CATSPER4 as well as auxiliary members CATSPERB, CATSPERG2, CATSPERD, CATSPERE, CATSPERZ, C2CD6/CATSPERT, SLCO6C1, TMEM249, TMEM262 and EFCAB9. HSPA1 may be an additional auxiliary complex member. The core complex members CATSPER1, CATSPER2, CATSPER3 and CATSPER4 form a heterotetrameric channel. The auxiliary CATSPERB, CATSPERG2, CATSPERD and CATSPERE subunits form a pavilion-like structure over the pore which stabilizes the complex through interactions with CATSPER4, CATSPER3, CATSPER1 and CATSPER2 respectively. SLCO6C1 interacts with CATSPERE and TMEM262/CATSPERH interacts with CATSPERB, further stabilizing the complex. C2CD6/CATSPERT interacts at least with CATSPERD and is required for targeting the CatSper complex in the flagellar membrane. Testis-specific. Specifically present in the principal piece of sperm tail (at protein level). Specifically expressed in the seminiferous tubules but not in the interstitial cells. Within the tubules, it is expressed in spermatocytes and spermatids, but not in spermatogonia.

It is found in the cell projection. The protein localises to the cilium. Its subcellular location is the flagellum membrane. In terms of biological role, auxiliary component of the CatSper complex, a complex involved in sperm cell hyperactivation. Sperm cell hyperactivation is needed for sperm motility which is essential late in the preparation of sperm for fertilization. The chain is Cation channel sperm-associated auxiliary subunit beta from Mus musculus (Mouse).